The chain runs to 274 residues: Type III pantothenate kinase (274 aa).

Residue 6 to 13 (DVGNTNTV) coordinates ATP. Residues Y110 and 117 to 120 (GADR) each bind substrate. D119 functions as the Proton acceptor in the catalytic mechanism. D139 contacts K(+). Position 142 (T142) interacts with ATP. T194 contacts substrate.

The protein belongs to the type III pantothenate kinase family. As to quaternary structure, homodimer. The cofactor is NH4(+). It depends on K(+) as a cofactor.

The protein resides in the cytoplasm. The catalysed reaction is (R)-pantothenate + ATP = (R)-4'-phosphopantothenate + ADP + H(+). It functions in the pathway cofactor biosynthesis; coenzyme A biosynthesis; CoA from (R)-pantothenate: step 1/5. Functionally, catalyzes the phosphorylation of pantothenate (Pan), the first step in CoA biosynthesis. The sequence is that of Type III pantothenate kinase from Koribacter versatilis (strain Ellin345).